A 450-amino-acid chain; its full sequence is Exodeoxyribonuclease 7 large subunit (450 aa).

It belongs to the XseA family. In terms of assembly, heterooligomer composed of large and small subunits.

Its subcellular location is the cytoplasm. The enzyme catalyses Exonucleolytic cleavage in either 5'- to 3'- or 3'- to 5'-direction to yield nucleoside 5'-phosphates.. Its function is as follows. Bidirectionally degrades single-stranded DNA into large acid-insoluble oligonucleotides, which are then degraded further into small acid-soluble oligonucleotides. The chain is Exodeoxyribonuclease 7 large subunit from Listeria welshimeri serovar 6b (strain ATCC 35897 / DSM 20650 / CCUG 15529 / CIP 8149 / NCTC 11857 / SLCC 5334 / V8).